A 295-amino-acid polypeptide reads, in one-letter code: Glycine--tRNA ligase alpha subunit (295 aa).

The protein belongs to the class-II aminoacyl-tRNA synthetase family. As to quaternary structure, tetramer of two alpha and two beta subunits.

Its subcellular location is the cytoplasm. The enzyme catalyses tRNA(Gly) + glycine + ATP = glycyl-tRNA(Gly) + AMP + diphosphate. The sequence is that of Glycine--tRNA ligase alpha subunit from Bacillus licheniformis (strain ATCC 14580 / DSM 13 / JCM 2505 / CCUG 7422 / NBRC 12200 / NCIMB 9375 / NCTC 10341 / NRRL NRS-1264 / Gibson 46).